Reading from the N-terminus, the 228-residue chain is Probable transcriptional regulatory protein SilR (228 aa).

A Response regulatory domain is found at 2-116; sequence KILIVEDDIK…ELLARVRTLL (115 aa). A 4-aspartylphosphate modification is found at Asp-51. The ompR/PhoB-type DNA-binding region spans 125–225; the sequence is ESQLKVADLS…VRGVGYMLEI (101 aa).

Phosphorylated by SilS.

It localises to the cytoplasm. Functionally, component of the sil cation-efflux system that confers resistance to silver. Probable member of a two-component regulatory system SilS/SilR. In Salmonella typhimurium, this protein is Probable transcriptional regulatory protein SilR (silR).